The sequence spans 239 residues: uncharacterized protein (239 aa).

A dksA C4-type; degenerate zinc finger spans residues 94-114 (CEVSGKEIPFERLEALPTATT). A compositionally biased stretch (acidic residues) spans 133–158 (ETPFGQFEFDDDEEIRAPYDSEDSYQ). Residues 133–182 (ETPFGQFEFDDDEEIRAPYDSEDSYQDVEKYGNSQTPQDMENPPLSYDDM) are disordered.

This is an uncharacterized protein from Bacillus subtilis (strain 168).